Here is a 187-residue protein sequence, read N- to C-terminus: Calmodulin-like protein 1 (187 aa).

Alanine 2 bears the N-acetylalanine mark. 4 consecutive EF-hand domains span residues 8 to 43 (EQIVEFREAFSLFDKDGDGSITTKELGTVMRSLGQN), 44 to 79 (PTEAELQDMISEVDADSNGNIEFKEFLGLMARKLRD), 81 to 116 (DSEEELKEAFRVFDKDQNGFISAAELRHVMANIGER), and 117 to 152 (LTDEEVGEMISEADVDGDGQINYEEFVKCMMAKKRR). 19 residues coordinate Ca(2+): aspartate 21, aspartate 23, aspartate 25, serine 27, glutamate 32, aspartate 57, aspartate 59, asparagine 61, asparagine 63, glutamate 68, aspartate 94, aspartate 96, asparagine 98, glutamate 105, aspartate 130, aspartate 132, aspartate 134, glutamine 136, and glutamate 141. Residues 153–187 (KRIEEKREHDGGSRTKSAGPSAAPASKRGQKCVIL) are disordered. Residues 154-165 (RIEEKREHDGGS) are compositionally biased toward basic and acidic residues. The segment covering 169–178 (SAGPSAAPAS) has biased composition (low complexity). Position 184 is a cysteine methyl ester (cysteine 184). Cysteine 184 carries the S-farnesyl cysteine lipid modification. Positions 185–187 (VIL) are cleaved as a propeptide — removed in mature form.

This sequence belongs to the calmodulin family. Expressed in roots, etiolated shoots and flowers.

The protein resides in the membrane. Calcium-binding protein that binds and activates CAMK1, a calcium/calmodulin-dependent kinase. The protein is Calmodulin-like protein 1 (CML1) of Oryza sativa subsp. indica (Rice).